A 110-amino-acid polypeptide reads, in one-letter code: UPF0251 protein PYRAB12660 (110 aa).

The protein belongs to the UPF0251 family.

In Pyrococcus abyssi (strain GE5 / Orsay), this protein is UPF0251 protein PYRAB12660.